The chain runs to 195 residues: Peptidyl-tRNA hydrolase (195 aa).

Tyr17 lines the tRNA pocket. Residue His22 is the Proton acceptor of the active site. TRNA contacts are provided by Phe68, Asn70, and Asn116.

The protein belongs to the PTH family. In terms of assembly, monomer.

Its subcellular location is the cytoplasm. It catalyses the reaction an N-acyl-L-alpha-aminoacyl-tRNA + H2O = an N-acyl-L-amino acid + a tRNA + H(+). Hydrolyzes ribosome-free peptidyl-tRNAs (with 1 or more amino acids incorporated), which drop off the ribosome during protein synthesis, or as a result of ribosome stalling. In terms of biological role, catalyzes the release of premature peptidyl moieties from peptidyl-tRNA molecules trapped in stalled 50S ribosomal subunits, and thus maintains levels of free tRNAs and 50S ribosomes. In Shewanella amazonensis (strain ATCC BAA-1098 / SB2B), this protein is Peptidyl-tRNA hydrolase.